A 678-amino-acid chain; its full sequence is Sulfoquinovosidase (678 aa).

A 6-sulfo-alpha-D-quinovosyldiacylglycerol-binding residues include Gln-288, Arg-301, Val-302, and Trp-304. Asp-405 (nucleophile) is an active-site residue. The active site involves Glu-408. Asp-472 acts as the Proton donor in catalysis. A 6-sulfo-alpha-D-quinovosyldiacylglycerol is bound at residue His-537.

The protein belongs to the glycosyl hydrolase 31 family.

It carries out the reaction a 6-sulfo-alpha-D-quinovosyldiacylglycerol + H2O = 6-sulfo-alpha-D-quinovose + a 1,2-diacyl-sn-glycerol. The catalysed reaction is 3-(6-sulfo-alpha-D-quinovosyl)glycerol + H2O = 6-sulfo-alpha-D-quinovose + glycerol. It participates in glycolipid metabolism. With respect to regulation, is inactivated in vitro by the mechanism-based inactivator 5-fluoro-beta-L-idopyranosyl fluoride (5FIdoF) that yields a covalent glycosyl-enzyme complex with the active site nucleophile Asp-405. Functionally, catalyzes the hydrolysis of sulfoquinovosyl diacylglycerides (SQDG) to sulfoquinovose (SQ), which is then degraded by E.coli through the SQ Embden-Meyerhof-Parnas (SQ-EMP) sulfoglycolysis pathway as a source of carbon and sulfur. Therefore, is likely involved in the utilization of the sulfoquinovose headgroup found in ubiquitous plant sulfolipids. Is also able to hydrolyze simple sulfoquinovosides such as sulfoquinovosyl glycerol (SQGro). In vitro, can use the substrate analog para-nitrophenyl alpha-sulfoquinovoside (PNPSQ), but shows no detectable activity toward 4-nitrophenyl alpha-D-glucopyranoside (PNPGlc). Is a retaining glycoside hydrolase, since it forms the alpha anomer of SQ. Also exhibits some alpha-glucosidase activity against alpha-glucosyl fluoride in vitro, although natural substrates, such as alpha-glucobioses are scarcely hydrolyzed. The protein is Sulfoquinovosidase of Escherichia coli (strain K12).